The primary structure comprises 449 residues: Hyaluronidase (449 aa).

The signal sequence occupies residues Met-1–Val-23. Disulfide bonds link Cys-47–Cys-340 and Cys-211–Cys-227. 2 N-linked (GlcNAc...) asparagine glycosylation sites follow: Asn-67 and Asn-103. Glu-135 serves as the catalytic Proton donor. The N-linked (GlcNAc...) asparagine glycan is linked to Asn-153. Asn-357 carries N-linked (GlcNAc...) asparagine glycosylation. Cystine bridges form between Cys-365–Cys-376, Cys-370–Cys-427, and Cys-429–Cys-438. N-linked (GlcNAc...) asparagine glycosylation occurs at Asn-401. The 12-residue stretch at Cys-427 to Cys-438 folds into the EGF-like domain.

Belongs to the glycosyl hydrolase 56 family. As to quaternary structure, monomer. As to expression, expressed by the venom gland.

The protein localises to the secreted. The catalysed reaction is Random hydrolysis of (1-&gt;4)-linkages between N-acetyl-beta-D-glucosamine and D-glucuronate residues in hyaluronate.. In terms of biological role, snake venom endo-hyaluronidase that degrades hyaluronan to smaller oligosaccharide fragments. In venom, it is not toxic by itself, but increases the diffusion of other venom proteins by degrading the extracellular matrix. In addition, it displays antiedematogenic activity. This is Hyaluronidase from Echis ocellatus (Ocellated saw-scaled viper).